The following is a 498-amino-acid chain: Glycerol kinase (498 aa).

Thr12 contacts ADP. Thr12, Thr13, and Ser14 together coordinate ATP. Position 12 (Thr12) interacts with sn-glycerol 3-phosphate. Arg16 is a binding site for ADP. Sn-glycerol 3-phosphate is bound by residues Arg82, Glu83, Tyr134, and Asp244. Glycerol contacts are provided by Arg82, Glu83, Tyr134, Asp244, and Gln245. Thr266 and Gly310 together coordinate ADP. ATP contacts are provided by Thr266, Gly310, Gln314, and Gly411. ADP-binding residues include Gly411 and Asn415.

This sequence belongs to the FGGY kinase family.

The catalysed reaction is glycerol + ATP = sn-glycerol 3-phosphate + ADP + H(+). It participates in polyol metabolism; glycerol degradation via glycerol kinase pathway; sn-glycerol 3-phosphate from glycerol: step 1/1. Inhibited by fructose 1,6-bisphosphate (FBP). Its function is as follows. Key enzyme in the regulation of glycerol uptake and metabolism. Catalyzes the phosphorylation of glycerol to yield sn-glycerol 3-phosphate. The chain is Glycerol kinase from Roseiflexus sp. (strain RS-1).